The sequence spans 398 residues: MEGAALLRVSVLCIWMSALFLGVGVRAEEAGARVQQNVPSGTDTGDPQSKPLGDWAAGTMDPESSIFIEDAIKYFKEKVSTQNLLLLLTDNEAWNGFVAAAELPRNEADELRKALDNLARQMIMKDKNWHDKGQQYRNWFLKEFPRLKSELEDNIRRLRALADGVQKVHKGTTIANVVSGSLSISSGILTLVGMGLAPFTEGGSLVLLEPGMELGITAALTGITSSTMDYGKKWWTQAQAHDLVIKSLDKLKEVREFLGENISNFLSLAGNTYQLTRGIGKDIRALRRARANLQSVPHASASRPRVTEPISAESGEQVERVNEPSILEMSRGVKLTDVAPVSFFLVLDVVYLVYESKHLHEGAKSETAEELKKVAQELEEKLNILNNNYKILQADQEL.

Positions 1–27 are cleaved as a signal peptide; sequence MEGAALLRVSVLCIWMSALFLGVGVRA. Over residues 35–47 the composition is skewed to polar residues; the sequence is QQNVPSGTDTGDP. The interval 35–55 is disordered; sequence QQNVPSGTDTGDPQSKPLGDW. Residue Asn261 is glycosylated (N-linked (GlcNAc...) asparagine). Residues 297-317 form a disordered region; that stretch reads PHASASRPRVTEPISAESGEQ. 2 positions are modified to phosphoserine; by FAM20C: Ser311 and Ser314.

This sequence belongs to the apolipoprotein L family. As to quaternary structure, in plasma, interacts with APOA1 and mainly associated with large high density lipoprotein particles. Phosphorylated by FAM20C in the extracellular medium. In terms of tissue distribution, plasma. Found on APOA-I-containing high density lipoprotein (HDL3). Expressed in pancreas, lung, prostate, liver, placenta and spleen.

It is found in the secreted. May play a role in lipid exchange and transport throughout the body. May participate in reverse cholesterol transport from peripheral cells to the liver. This Homo sapiens (Human) protein is Apolipoprotein L1 (APOL1).